The primary structure comprises 154 residues: Ubiquitin-conjugating enzyme E2 L5 (154 aa).

The region spanning Ala-2 to Glu-149 is the UBC core domain. Cys-86 acts as the Glycyl thioester intermediate in catalysis.

The protein belongs to the ubiquitin-conjugating enzyme family.

It carries out the reaction S-ubiquitinyl-[E1 ubiquitin-activating enzyme]-L-cysteine + [E2 ubiquitin-conjugating enzyme]-L-cysteine = [E1 ubiquitin-activating enzyme]-L-cysteine + S-ubiquitinyl-[E2 ubiquitin-conjugating enzyme]-L-cysteine.. It participates in protein modification; protein ubiquitination. In terms of biological role, catalyzes the covalent attachment of ubiquitin to other proteins. The protein is Ubiquitin-conjugating enzyme E2 L5 of Homo sapiens (Human).